We begin with the raw amino-acid sequence, 696 residues long: MEIKKRIEELKNNQTGLTFYSSQELNDLEKIVKLREDLNKYRDSYYNDNKSLISDYEFDILLKELESLEEKYPQYKEISSPTTSVGASLKENKFKKVEHLHPMLSLANSYNIGEIVEFIERIKKKIPKEQELKYCLEVKLDGLSISLTYRQGKLVRAVTRGDGFIGEDVTENILEIASIVKTLPQAIDMEIRGEVVLPLASFEKLNNERLEKGEELFANPRNAASGTLRQLDSKIVKDRGLDAYFYFLVEADKLGLKSHSESIKFLESMGIKTTGIFELLETSKDIEKRINYWEKERESLPYETDGLVIKVDEINLWDEIGYTSKTPRWAIAYKFPAHQVSTVLNDVTWQVGRTGKLTPVAELQEVELSGSKVKRASLHNISEIQRKDIRIGDRVFIEKAAEIIPQVVKAIKEERTGNEKVIEEPTCCPICNHKLEREEGLVDIKCINEECPAKVQGEIEYFVSRDALNIMGLGSKIVEKFIDLGYIKTVVDIFDLKNHREALENIDKMGKKSIENLLNSIEESKNRDYDKILYALGIAEIGKVTSKILAKASKNIDKLMAMTFEDLTSIEGIGEIAANEIIAFFTKEKNQKIIQGLKEKGLKFEIKESEASVQNVNPNFVGKNFLFTGTLKHFTREQIKEEIEKLGGKNLSSVSKNLDYLIVGEKAGSKLKKAQEIPTIKILTEEEFIELKDKFD.

NAD(+)-binding positions include 55–59, 105–106, and Glu137; these read DYEFD and SL. Lys139 functions as the N6-AMP-lysine intermediate in the catalytic mechanism. NAD(+) contacts are provided by Arg160, Glu194, Lys310, and Lys334. Positions 428, 431, 446, and 451 each coordinate Zn(2+). Residues 615 to 696 enclose the BRCT domain; sequence NVNPNFVGKN…EFIELKDKFD (82 aa).

The protein belongs to the NAD-dependent DNA ligase family. LigA subfamily. Requires Mg(2+) as cofactor. Mn(2+) serves as cofactor.

The enzyme catalyses NAD(+) + (deoxyribonucleotide)n-3'-hydroxyl + 5'-phospho-(deoxyribonucleotide)m = (deoxyribonucleotide)n+m + AMP + beta-nicotinamide D-nucleotide.. In terms of biological role, DNA ligase that catalyzes the formation of phosphodiester linkages between 5'-phosphoryl and 3'-hydroxyl groups in double-stranded DNA using NAD as a coenzyme and as the energy source for the reaction. It is essential for DNA replication and repair of damaged DNA. The polypeptide is DNA ligase (Fusobacterium nucleatum subsp. nucleatum (strain ATCC 25586 / DSM 15643 / BCRC 10681 / CIP 101130 / JCM 8532 / KCTC 2640 / LMG 13131 / VPI 4355)).